A 490-amino-acid polypeptide reads, in one-letter code: Glutamate--tRNA ligase (490 aa).

The 'HIGH' region motif lies at 9-19; sequence PSPTGLQHIGG. The short motif at 251 to 255 is the 'KMSKS' region element; it reads KLSKR. Residue Lys254 participates in ATP binding.

The protein belongs to the class-I aminoacyl-tRNA synthetase family. Glutamate--tRNA ligase type 1 subfamily. Monomer.

It is found in the cytoplasm. The catalysed reaction is tRNA(Glu) + L-glutamate + ATP = L-glutamyl-tRNA(Glu) + AMP + diphosphate. Functionally, catalyzes the attachment of glutamate to tRNA(Glu) in a two-step reaction: glutamate is first activated by ATP to form Glu-AMP and then transferred to the acceptor end of tRNA(Glu). This chain is Glutamate--tRNA ligase, found in Borreliella burgdorferi (strain ATCC 35210 / DSM 4680 / CIP 102532 / B31) (Borrelia burgdorferi).